The following is a 402-amino-acid chain: NADH-quinone oxidoreductase subunit D (402 aa).

This sequence belongs to the complex I 49 kDa subunit family. In terms of assembly, NDH-1 is composed of 14 different subunits. Subunits NuoB, C, D, E, F, and G constitute the peripheral sector of the complex.

The protein resides in the cell inner membrane. It carries out the reaction a quinone + NADH + 5 H(+)(in) = a quinol + NAD(+) + 4 H(+)(out). Its function is as follows. NDH-1 shuttles electrons from NADH, via FMN and iron-sulfur (Fe-S) centers, to quinones in the respiratory chain. The immediate electron acceptor for the enzyme in this species is believed to be ubiquinone. Couples the redox reaction to proton translocation (for every two electrons transferred, four hydrogen ions are translocated across the cytoplasmic membrane), and thus conserves the redox energy in a proton gradient. This chain is NADH-quinone oxidoreductase subunit D, found in Cereibacter sphaeroides (strain ATCC 17025 / ATH 2.4.3) (Rhodobacter sphaeroides).